A 317-amino-acid polypeptide reads, in one-letter code: Lipoyl synthase (317 aa).

The [4Fe-4S] cluster site is built by C56, C61, C67, C82, C86, C89, and S298. The region spanning 68–287 is the Radical SAM core domain; that stretch reads WEDREATFLI…KEEAEQIGFS (220 aa).

The protein belongs to the radical SAM superfamily. Lipoyl synthase family. [4Fe-4S] cluster serves as cofactor.

Its subcellular location is the cytoplasm. It catalyses the reaction [[Fe-S] cluster scaffold protein carrying a second [4Fe-4S](2+) cluster] + N(6)-octanoyl-L-lysyl-[protein] + 2 oxidized [2Fe-2S]-[ferredoxin] + 2 S-adenosyl-L-methionine + 4 H(+) = [[Fe-S] cluster scaffold protein] + N(6)-[(R)-dihydrolipoyl]-L-lysyl-[protein] + 4 Fe(3+) + 2 hydrogen sulfide + 2 5'-deoxyadenosine + 2 L-methionine + 2 reduced [2Fe-2S]-[ferredoxin]. It functions in the pathway protein modification; protein lipoylation via endogenous pathway; protein N(6)-(lipoyl)lysine from octanoyl-[acyl-carrier-protein]: step 2/2. In terms of biological role, catalyzes the radical-mediated insertion of two sulfur atoms into the C-6 and C-8 positions of the octanoyl moiety bound to the lipoyl domains of lipoate-dependent enzymes, thereby converting the octanoylated domains into lipoylated derivatives. The polypeptide is Lipoyl synthase (Streptomyces coelicolor (strain ATCC BAA-471 / A3(2) / M145)).